A 158-amino-acid polypeptide reads, in one-letter code: 6,7-dimethyl-8-ribityllumazine synthase (158 aa).

Residues Phe24, 58 to 60, and 82 to 84 contribute to the 5-amino-6-(D-ribitylamino)uracil site; these read AFE and AVI. (2S)-2-hydroxy-3-oxobutyl phosphate is bound at residue 87–88; that stretch reads GT. Residue His90 is the Proton donor of the active site. Phe115 is a binding site for 5-amino-6-(D-ribitylamino)uracil. (2S)-2-hydroxy-3-oxobutyl phosphate is bound at residue Arg129.

This sequence belongs to the DMRL synthase family. As to quaternary structure, forms an icosahedral capsid composed of 60 subunits, arranged as a dodecamer of pentamers.

It catalyses the reaction (2S)-2-hydroxy-3-oxobutyl phosphate + 5-amino-6-(D-ribitylamino)uracil = 6,7-dimethyl-8-(1-D-ribityl)lumazine + phosphate + 2 H2O + H(+). Its pathway is cofactor biosynthesis; riboflavin biosynthesis; riboflavin from 2-hydroxy-3-oxobutyl phosphate and 5-amino-6-(D-ribitylamino)uracil: step 1/2. Catalyzes the formation of 6,7-dimethyl-8-ribityllumazine by condensation of 5-amino-6-(D-ribitylamino)uracil with 3,4-dihydroxy-2-butanone 4-phosphate. This is the penultimate step in the biosynthesis of riboflavin. The protein is 6,7-dimethyl-8-ribityllumazine synthase of Pseudomonas paraeruginosa (strain DSM 24068 / PA7) (Pseudomonas aeruginosa (strain PA7)).